Here is a 451-residue protein sequence, read N- to C-terminus: UDP-N-acetylmuramate--L-alanine ligase (451 aa).

110-116 is a binding site for ATP; the sequence is GTHGKTT.

The protein belongs to the MurCDEF family.

The protein localises to the cytoplasm. It catalyses the reaction UDP-N-acetyl-alpha-D-muramate + L-alanine + ATP = UDP-N-acetyl-alpha-D-muramoyl-L-alanine + ADP + phosphate + H(+). Its pathway is cell wall biogenesis; peptidoglycan biosynthesis. Its function is as follows. Cell wall formation. The chain is UDP-N-acetylmuramate--L-alanine ligase from Francisella tularensis subsp. novicida (strain U112).